A 440-amino-acid chain; its full sequence is Tyrosine--tRNA ligase (440 aa).

L-tyrosine is bound at residue Tyr-46. A 'HIGH' region motif is present at residues 51–60; the sequence is PTAASLHIGN. Residues Tyr-181 and Gln-185 each contribute to the L-tyrosine site. A 'KMSKS' region motif is present at residues 241 to 245; that stretch reads KFGKS. Lys-244 contributes to the ATP binding site. One can recognise an S4 RNA-binding domain in the interval 373–439; that stretch reads DRVIDAAQAA…GKKALGAVEN (67 aa).

Belongs to the class-I aminoacyl-tRNA synthetase family. TyrS type 1 subfamily. As to quaternary structure, homodimer.

It is found in the cytoplasm. It carries out the reaction tRNA(Tyr) + L-tyrosine + ATP = L-tyrosyl-tRNA(Tyr) + AMP + diphosphate + H(+). In terms of biological role, catalyzes the attachment of tyrosine to tRNA(Tyr) in a two-step reaction: tyrosine is first activated by ATP to form Tyr-AMP and then transferred to the acceptor end of tRNA(Tyr). This chain is Tyrosine--tRNA ligase, found in Bifidobacterium longum (strain NCC 2705).